The following is a 323-amino-acid chain: Prenyl transferase (323 aa).

Positions 46, 49, and 81 each coordinate isopentenyl diphosphate. 2 residues coordinate Mg(2+): aspartate 88 and aspartate 92. Arginine 97 is a binding site for an all-trans-polyprenyl diphosphate. Arginine 98 lines the isopentenyl diphosphate pocket. An all-trans-polyprenyl diphosphate contacts are provided by lysine 174, threonine 175, and glutamine 212.

The protein belongs to the FPP/GGPP synthase family. Mg(2+) serves as cofactor.

Its subcellular location is the plastid. It localises to the cyanelle. Functionally, possible role in synthesis of the nonaprenyl side chain of plastoquinone or in synthesis of other prenyl chains such as undekaprenyl pyrophosphate. This is Prenyl transferase (preA) from Cyanophora paradoxa.